A 430-amino-acid chain; its full sequence is NADH-quinone oxidoreductase subunit D 1 (430 aa).

Positions 1–36 (MSEAKGVGGIDPRATPGSAGAGERPPMGTVSRAGDG) are disordered.

It belongs to the complex I 49 kDa subunit family. In terms of assembly, NDH-1 is composed of 14 different subunits. Subunits NuoB, C, D, E, F, and G constitute the peripheral sector of the complex.

Its subcellular location is the cell inner membrane. The enzyme catalyses a quinone + NADH + 5 H(+)(in) = a quinol + NAD(+) + 4 H(+)(out). Its function is as follows. NDH-1 shuttles electrons from NADH, via FMN and iron-sulfur (Fe-S) centers, to quinones in the respiratory chain. The immediate electron acceptor for the enzyme in this species is believed to be ubiquinone. Couples the redox reaction to proton translocation (for every two electrons transferred, four hydrogen ions are translocated across the cytoplasmic membrane), and thus conserves the redox energy in a proton gradient. This is NADH-quinone oxidoreductase subunit D 1 from Anaeromyxobacter dehalogenans (strain 2CP-C).